The primary structure comprises 271 residues: PH domain-containing protein ECU06_0670 (271 aa).

Residues 26-145 (AKKTLDSSES…EKKNDAFIPP (120 aa)) form a disordered region. Basic and acidic residues-rich tracts occupy residues 42–64 (EVGEVDEVKGMETDAEKKDEPAM), 92–120 (QPEKQEAADGEDSSKKESPREEQTPLLDK), and 128–140 (EENAKPSSEKKND). Residues 166-267 (NTVVEGWMWK…WVEKLNETIR (102 aa)) enclose the PH domain.

This is PH domain-containing protein ECU06_0670 from Encephalitozoon cuniculi (strain GB-M1) (Microsporidian parasite).